The chain runs to 125 residues: Egg cell-secreted protein 1.3 (125 aa).

The N-terminal stretch at 1-24 is a signal peptide; that stretch reads MASNTSFLFVTVTLLLVLNVSSRA.

This sequence belongs to the plant egg cell-secreted peptide family. In terms of tissue distribution, restricted to female reproductive tissues, specifically accumulating in storage vesicles of the unfertilized egg cell.

The protein localises to the cytoplasmic vesicle. It is found in the secreted. In terms of biological role, involved in the regulation of gamete interactions during the double fertilization and to prevent multiple-pollen tube attraction; mediates the redistribution of the gamete fusogen HAP2/GCS1 to the cell surface after secretion upon sperm arrival. This is Egg cell-secreted protein 1.3 (EC1.3) from Arabidopsis thaliana (Mouse-ear cress).